The primary structure comprises 418 residues: EPS I polysaccharide export inner membrane protein EpsF (418 aa).

The next 10 helical transmembrane spans lie at 21–41 (VLVV…FPIA), 45–65 (CAAI…LATA), 142–162 (PLMV…IAIY), 170–190 (YVVF…GSAI), 222–242 (AGTH…MLFL), 262–282 (LLVL…EFVM), 296–316 (SAWE…AWLF), 326–346 (LTYF…PAVG), 347–367 (ARLF…FFFA), and 377–397 (KTLA…IVDV).

This sequence to S.marcescens SfuB.

The protein localises to the cell inner membrane. Its function is as follows. Probably involved in polymerization and/or export of exopolysaccharide EPS I which functions as a virulence factor. May play a role in export of EPS I or its intermediates across the membranes. This chain is EPS I polysaccharide export inner membrane protein EpsF (epsF), found in Ralstonia solanacearum (Pseudomonas solanacearum).